Reading from the N-terminus, the 237-residue chain is tRNA(His) guanylyltransferase (237 aa).

Ala-2 bears the N-acetylalanine mark. Mg(2+)-binding residues include Asp-29 and Gly-30. GTP is bound by residues Lys-32, Phe-33, His-34, Lys-44, and Asp-47. Mg(2+) is bound at residue Asp-77.

This sequence belongs to the tRNA(His) guanylyltransferase family. As to quaternary structure, homotetramer. Mg(2+) is required as a cofactor.

It carries out the reaction a 5'-end ribonucleotide-tRNA(His) + GTP + ATP + H2O = a 5'-end phospho-guanosine-ribonucleotide-tRNA(His) + AMP + 2 diphosphate + H(+). The catalysed reaction is a 5'-end ribonucleotide-RNA + a ribonucleoside 5'-triphosphate + ATP + H2O = a 5'-end phospho-ribonucleoside-ribonucleotide-RNA + AMP + 2 diphosphate + H(+). In terms of biological role, acts as a tRNA(His) guanylyltransferase that catalyzes 3'-5' addition of a single guanosine residue to the -1 position of tRNA(His), to form a non-Watson-Crick G(-1):A-73 base pair. After addition of G(-1), THG1 removes pyrophosphate from the tRNA 5'-end, generating 5'-monophosphorylated G(-1)-containing tRNA which is important for recognition of tRNA(His) by its cognate histidyl-tRNA synthetase. In addition to the single-G(-1) addition reaction, THG1 polymerizes multiple G residues to the 5'-end of tRNA(His) variants using the 3'-end of the tRNA(His) acceptor stem as a template. The sequence is that of tRNA(His) guanylyltransferase from Saccharomyces cerevisiae (strain ATCC 204508 / S288c) (Baker's yeast).